The chain runs to 210 residues: DNA dC-&gt;dU-editing enzyme APOBEC-3H (210 aa).

The 123-residue stretch at 4-126 folds into the CMP/dCMP-type deaminase domain; that stretch reads LTAKTFSLQF…PNYQEGLLLL (123 aa). Residue H54 participates in Zn(2+) binding. E56 acts as the Proton donor in catalysis. C85 and C88 together coordinate Zn(2+). The interval 182–210 is necessary and sufficient for localization to the cytoplasm; the sequence is SRSVDVLENGLRSLQLGPVTPSSSIRNSR.

The protein belongs to the cytidine and deoxycytidylate deaminase family. Homodimer. The cofactor is Zn(2+).

It is found in the cytoplasm. The enzyme catalyses a 2'-deoxycytidine in single-stranded DNA + H2O + H(+) = a 2'-deoxyuridine in single-stranded DNA + NH4(+). Its activity is regulated as follows. Antiviral activity is neutralized by the simian immunodeficiency virus rhesus (SIV-mac) virion infectivity factor (VIF). In terms of biological role, DNA deaminase (cytidine deaminase) which acts as an inhibitor of retrovirus replication and retrotransposon mobility via deaminase-dependent and -independent mechanisms. Exhibits antiviral activity against vif-deficient HIV-1. After the penetration of retroviral nucleocapsids into target cells of infection and the initiation of reverse transcription, it can induce the conversion of cytosine to uracil in the minus-sense single-strand viral DNA, leading to G-to-A hypermutations in the subsequent plus-strand viral DNA. The resultant detrimental levels of mutations in the proviral genome, along with a deamination-independent mechanism that works prior to the proviral integration, together exert efficient antiretroviral effects in infected target cells. Selectively targets single-stranded DNA and does not deaminate double-stranded DNA or single- or double-stranded RNA. This chain is DNA dC-&gt;dU-editing enzyme APOBEC-3H, found in Macaca mulatta (Rhesus macaque).